The primary structure comprises 296 residues: Sulfotransferase 6B1 (296 aa).

The active-site Proton acceptor is the His112. Residues Arg134, Ser142, Tyr197, and 253–255 (RKG) contribute to the 3'-phosphoadenylyl sulfate site.

The protein belongs to the sulfotransferase 1 family.

It is found in the cytoplasm. The protein resides in the cytosol. It carries out the reaction thyroxine + 3'-phosphoadenylyl sulfate = thyroxine sulfate + adenosine 3',5'-bisphosphate + H(+). Its activity is regulated as follows. Strongly inhibited by the divalent metal cations Fe(2+), Hg(2+), Co(2+), Zn(2+), Cu(2+) and Cd(2+). Its function is as follows. Sulfotransferase that utilizes 3'-phospho-5'-adenylyl sulfate (PAPS) as sulfonate donor to catalyze the sulfate conjugation of a variety of xenobiotic and endogenous compounds, including dopamine, T3 (triiodo-L-thyronine), T4 (thyroxine), flavonoids, isoflavonoids, and other phenolic compounds. This is Sulfotransferase 6B1 from Danio rerio (Zebrafish).